We begin with the raw amino-acid sequence, 103 residues long: Ig kappa-b5 chain C region (103 aa).

Residues 5–99 (PTVLIFPPAP…GAGSVVQSFS (95 aa)) enclose the Ig-like domain. A disulfide bond links cysteine 26 and cysteine 85.

The protein is Ig kappa-b5 chain C region of Oryctolagus cuniculus (Rabbit).